We begin with the raw amino-acid sequence, 342 residues long: tRNA N6-adenosine threonylcarbamoyltransferase (342 aa).

His-114 and His-118 together coordinate Fe cation. Substrate-binding positions include 136 to 140 (LVSGG), Asp-169, Gly-182, Asp-186, and Asn-275. Asp-301 is a binding site for Fe cation.

It belongs to the KAE1 / TsaD family. Fe(2+) is required as a cofactor.

It localises to the cytoplasm. The catalysed reaction is L-threonylcarbamoyladenylate + adenosine(37) in tRNA = N(6)-L-threonylcarbamoyladenosine(37) in tRNA + AMP + H(+). In terms of biological role, required for the formation of a threonylcarbamoyl group on adenosine at position 37 (t(6)A37) in tRNAs that read codons beginning with adenine. Is involved in the transfer of the threonylcarbamoyl moiety of threonylcarbamoyl-AMP (TC-AMP) to the N6 group of A37, together with TsaE and TsaB. TsaD likely plays a direct catalytic role in this reaction. The protein is tRNA N6-adenosine threonylcarbamoyltransferase of Streptococcus pyogenes serotype M2 (strain MGAS10270).